Consider the following 77-residue polypeptide: SS18-like protein 2 (77 aa).

Positions 50–53 (YQHV) match the SH2-binding motif.

The protein belongs to the SS18 family.

This Homo sapiens (Human) protein is SS18-like protein 2 (SS18L2).